The following is a 417-amino-acid chain: Dihydrolipoyllysine-residue succinyltransferase component of 2-oxoglutarate dehydrogenase complex (417 aa).

In terms of domain architecture, Lipoyl-binding spans 1–76 (MAEIKVPELA…QVGEIIGTIS (76 aa)). At Lys-42 the chain carries N6-lipoyllysine. The interval 75–191 (ISEGAGESSA…SFDKPVEVQK (117 aa)) is disordered. Composition is skewed to basic and acidic residues over residues 89–103 (EKTE…EKQA) and 152–163 (RKQDVEAYEKPA). One can recognise a Peripheral subunit-binding (PSBD) domain in the interval 123–160 (IASPSARKLAREKGIDLSQVPTGDPLGRVRKQDVEAYE). Positions 164–182 (SKPAPQQKQQPQAQKAQQS) are enriched in low complexity. Residues His-388 and Asp-392 contribute to the active site.

The protein belongs to the 2-oxoacid dehydrogenase family. In terms of assembly, forms a 24-polypeptide structural core with octahedral symmetry. Part of the 2-oxoglutarate dehydrogenase (OGDH) complex composed of E1 (2-oxoglutarate dehydrogenase), E2 (dihydrolipoamide succinyltransferase) and E3 (dihydrolipoamide dehydrogenase); the complex contains multiple copies of the three enzymatic components (E1, E2 and E3). The cofactor is (R)-lipoate.

It catalyses the reaction N(6)-[(R)-dihydrolipoyl]-L-lysyl-[protein] + succinyl-CoA = N(6)-[(R)-S(8)-succinyldihydrolipoyl]-L-lysyl-[protein] + CoA. Its pathway is amino-acid degradation; L-lysine degradation via saccharopine pathway; glutaryl-CoA from L-lysine: step 6/6. Functionally, E2 component of the 2-oxoglutarate dehydrogenase (OGDH) complex which catalyzes the second step in the conversion of 2-oxoglutarate to succinyl-CoA and CO(2). The protein is Dihydrolipoyllysine-residue succinyltransferase component of 2-oxoglutarate dehydrogenase complex (odhB) of Bacillus subtilis (strain 168).